Here is a 350-residue protein sequence, read N- to C-terminus: Dihydroorotase (350 aa).

Zn(2+) contacts are provided by His-13 and His-15. Substrate is bound by residues 15-17 (HLR) and Asn-41. Zn(2+)-binding residues include Lys-99, His-136, and His-174. N6-carboxylysine is present on Lys-99. His-136 provides a ligand contact to substrate. Residue Leu-219 coordinates substrate. Asp-247 is a Zn(2+) binding site. Residue Asp-247 is part of the active site. The substrate site is built by His-251 and Ala-263.

It belongs to the metallo-dependent hydrolases superfamily. DHOase family. Class II DHOase subfamily. In terms of assembly, homodimer. The cofactor is Zn(2+).

The enzyme catalyses (S)-dihydroorotate + H2O = N-carbamoyl-L-aspartate + H(+). Its pathway is pyrimidine metabolism; UMP biosynthesis via de novo pathway; (S)-dihydroorotate from bicarbonate: step 3/3. Catalyzes the reversible cyclization of carbamoyl aspartate to dihydroorotate. In Allorhizobium ampelinum (strain ATCC BAA-846 / DSM 112012 / S4) (Agrobacterium vitis (strain S4)), this protein is Dihydroorotase.